The chain runs to 392 residues: ATP-dependent RNA helicase eIF4A (392 aa).

Positions 19 to 47 match the Q motif motif; that stretch reads DTFDDMNLKPELLRGIYAYGFERPSAIQQ. Residues 50 to 220 form the Helicase ATP-binding domain; it reads IMPILGERDV…TKFMRDPIRI (171 aa). Position 63 to 70 (63 to 70) interacts with ATP; it reads AQSGTGKT. Ser-65 carries the phosphoserine modification. The DEAD box motif lies at 168-171; the sequence is DEAD. The Helicase C-terminal domain maps to 231–392; that stretch reads GIKQFYVAVE…EMPMNIADLI (162 aa).

The protein belongs to the DEAD box helicase family. eIF4A subfamily. As to quaternary structure, component of the eIF4F complex, which composition varies with external and internal environmental conditions. It is composed of at least eIF4A, eIF4E and eIF4G.

Its subcellular location is the cytoplasm. The catalysed reaction is ATP + H2O = ADP + phosphate + H(+). Its function is as follows. ATP-dependent RNA helicase which is a subunit of the eIF4F complex involved in cap recognition and is required for mRNA binding to ribosome. In the current model of translation initiation, eIF4A unwinds RNA secondary structures in the 5'-UTR of mRNAs which is necessary to allow efficient binding of the small ribosomal subunit, and subsequent scanning for the initiator codon. The chain is ATP-dependent RNA helicase eIF4A (tif1) from Schizosaccharomyces pombe (strain 972 / ATCC 24843) (Fission yeast).